We begin with the raw amino-acid sequence, 476 residues long: Hydrogenase-4 component F homolog (476 aa).

Helical transmembrane passes span 1–21 (MSAA…SQIS), 25–45 (ISSW…LFLL), 54–74 (FFLV…IGFT), 120–140 (IGLM…MVGI), 153–173 (YFIL…LFYI), 202–222 (LVNI…GLFP), 235–255 (PTPI…YAIL), 270–290 (AGPL…LMFY), 307–327 (MGII…AGLL), 368–388 (LGWG…MGVF), 402–422 (SPLL…ALIL), and 442–462 (LYLP…YIPP).

This sequence belongs to the complex I subunit 5 family.

It is found in the cell inner membrane. The chain is Hydrogenase-4 component F homolog (hyfF) from Methylacidiphilum infernorum (isolate V4) (Methylokorus infernorum (strain V4)).